Reading from the N-terminus, the 505-residue chain is Deoxyguanosinetriphosphate triphosphohydrolase (505 aa).

One can recognise an HD domain in the interval 66-273 (RLTHSMEVQQ…MEAADDISYC (208 aa)).

It belongs to the dGTPase family. Type 1 subfamily. Homotetramer. Mg(2+) serves as cofactor.

It catalyses the reaction dGTP + H2O = 2'-deoxyguanosine + triphosphate + H(+). Its activity is regulated as follows. Inhibited by the action of reducing agents such as dithiothreitol and 2-mercaptoethanol. In terms of biological role, dGTPase preferentially hydrolyzes dGTP over the other canonical NTPs. In Shigella boydii, this protein is Deoxyguanosinetriphosphate triphosphohydrolase.